The primary structure comprises 1304 residues: DNA-directed RNA polymerase subunit beta' (1304 aa).

The segment at 1-23 (MSEKGRFSAGLSRQAADGNKADA) is disordered. Zn(2+) contacts are provided by Cys-241, Cys-315, Cys-322, and Cys-325. The span at 1256-1268 (AAEPEPDEEEEEP) shows a compositional bias: acidic residues. The interval 1256–1304 (AAEPEPDEEEEEPAVLPELPPRLILEDDQLIDDSTPAFDELEEDDDEEE) is disordered. Over residues 1269 to 1278 (AVLPELPPRL) the composition is skewed to low complexity. A compositionally biased stretch (acidic residues) spans 1294–1304 (DELEEDDDEEE).

It belongs to the RNA polymerase beta' chain family. RpoC2 subfamily. In cyanobacteria the RNAP catalytic core is composed of 2 alpha, 1 beta, 1 beta', 1 gamma and 1 omega subunit. When a sigma factor is associated with the core the holoenzyme is formed, which can initiate transcription. The cofactor is Zn(2+).

The enzyme catalyses RNA(n) + a ribonucleoside 5'-triphosphate = RNA(n+1) + diphosphate. In terms of biological role, DNA-dependent RNA polymerase catalyzes the transcription of DNA into RNA using the four ribonucleoside triphosphates as substrates. The sequence is that of DNA-directed RNA polymerase subunit beta' from Synechococcus sp. (strain JA-2-3B'a(2-13)) (Cyanobacteria bacterium Yellowstone B-Prime).